Reading from the N-terminus, the 337-residue chain is Glyceraldehyde-3-phosphate dehydrogenase (337 aa).

NAD(+)-binding positions include 11-12 and Gly-111; that span reads TI. Residue 140 to 142 participates in D-glyceraldehyde 3-phosphate binding; that stretch reads SCN. The active-site Nucleophile is the Cys-141. Residue Arg-169 participates in NAD(+) binding. A disordered region spans residues 177-196; sequence KKGPINSIVPTTEVPSHHGP. Residue 194–195 coordinates D-glyceraldehyde 3-phosphate; the sequence is HG. Residue Gln-301 participates in NAD(+) binding.

Belongs to the glyceraldehyde-3-phosphate dehydrogenase family. As to quaternary structure, homotetramer.

It is found in the cytoplasm. It catalyses the reaction D-glyceraldehyde 3-phosphate + phosphate + NADP(+) = (2R)-3-phospho-glyceroyl phosphate + NADPH + H(+). It carries out the reaction D-glyceraldehyde 3-phosphate + phosphate + NAD(+) = (2R)-3-phospho-glyceroyl phosphate + NADH + H(+). It functions in the pathway carbohydrate degradation; glycolysis; pyruvate from D-glyceraldehyde 3-phosphate: step 1/5. The protein is Glyceraldehyde-3-phosphate dehydrogenase of Methanosphaera stadtmanae (strain ATCC 43021 / DSM 3091 / JCM 11832 / MCB-3).